A 313-amino-acid chain; its full sequence is Porphobilinogen deaminase (313 aa).

C242 carries the S-(dipyrrolylmethanemethyl)cysteine modification.

Belongs to the HMBS family. As to quaternary structure, monomer. It depends on dipyrromethane as a cofactor.

It catalyses the reaction 4 porphobilinogen + H2O = hydroxymethylbilane + 4 NH4(+). It participates in porphyrin-containing compound metabolism; protoporphyrin-IX biosynthesis; coproporphyrinogen-III from 5-aminolevulinate: step 2/4. Its function is as follows. Tetrapolymerization of the monopyrrole PBG into the hydroxymethylbilane pre-uroporphyrinogen in several discrete steps. This is Porphobilinogen deaminase from Pseudomonas fluorescens (strain Pf0-1).